A 339-amino-acid chain; its full sequence is tRNA pseudouridine synthase D (339 aa).

Catalysis depends on Asp-80, which acts as the Nucleophile. The region spanning 155–311 (GFPNYFTEQR…AKGFSWAFEL (157 aa)) is the TRUD domain.

The protein belongs to the pseudouridine synthase TruD family.

The catalysed reaction is uridine(13) in tRNA = pseudouridine(13) in tRNA. Its function is as follows. Responsible for synthesis of pseudouridine from uracil-13 in transfer RNAs. This chain is tRNA pseudouridine synthase D, found in Haemophilus influenzae (strain PittEE).